The chain runs to 158 residues: Protein Smg homolog (158 aa).

This sequence belongs to the Smg family.

This is Protein Smg homolog from Pseudoalteromonas atlantica (strain T6c / ATCC BAA-1087).